Consider the following 301-residue polypeptide: Homoserine kinase (301 aa).

89–99 is an ATP binding site; it reads KPGSGLGSSSA.

This sequence belongs to the GHMP kinase family. Homoserine kinase subfamily.

The protein localises to the cytoplasm. It carries out the reaction L-homoserine + ATP = O-phospho-L-homoserine + ADP + H(+). The protein operates within amino-acid biosynthesis; L-threonine biosynthesis; L-threonine from L-aspartate: step 4/5. Its function is as follows. Catalyzes the ATP-dependent phosphorylation of L-homoserine to L-homoserine phosphate. The sequence is that of Homoserine kinase from Methanococcus maripaludis (strain C5 / ATCC BAA-1333).